Reading from the N-terminus, the 211-residue chain is Urease accessory protein UreF (211 aa).

It belongs to the UreF family. In terms of assembly, ureD, UreF and UreG form a complex that acts as a GTP-hydrolysis-dependent molecular chaperone, activating the urease apoprotein by helping to assemble the nickel containing metallocenter of UreC. The UreE protein probably delivers the nickel.

The protein localises to the cytoplasm. Required for maturation of urease via the functional incorporation of the urease nickel metallocenter. The polypeptide is Urease accessory protein UreF (Mycobacterium sp. (strain JLS)).